The sequence spans 247 residues: NifU-like scaffold protein (247 aa).

It belongs to the NifU family. Homodimer.

It is found in the plastid. The protein localises to the apicoplast. The protein operates within cofactor biosynthesis; iron-sulfur cluster biosynthesis. Functionally, binds and transfers [4Fe-4S] iron-sulfur clusters to target proteins. This is NifU-like scaffold protein from Plasmodium falciparum (isolate 3D7).